A 316-amino-acid chain; its full sequence is Phosphatidylinositol mannoside acyltransferase (316 aa).

The Proton acceptor role is filled by histidine 137. 2 residues coordinate hexadecanoyl-CoA: histidine 137 and arginine 175. The active site involves glutamate 211. Glutamate 240 lines the hexadecanoyl-CoA pocket.

It belongs to the LpxL/LpxM/LpxP family.

It is found in the cell inner membrane. It carries out the reaction a 2,6-O-bis(alpha-D-mannopyranosyl)-1-phosphatidyl-1D-myo-inositol + an acyl-CoA = a 2-O-(alpha-D-mannosyl)-6-O-(6-O-acyl-alpha-D-mannosyl)-1-phosphatidyl-1D-myo-inositol + CoA. It catalyses the reaction a 1,2-diacyl-sn-glycero-3-phospho-[alpha-D-mannopyranosyl-(1&lt;-&gt;6)-D-myo-inositol] + an acyl-CoA = a 1,2-diacyl-sn-glycero-3-phospho-[alpha-D-6-acyl-mannopyranosyl-(1&lt;-&gt;6)-D-myo-inositol] + CoA. The protein operates within phospholipid metabolism; phosphatidylinositol metabolism. In terms of biological role, catalyzes the transfer of a palmitoyl moiety from palmitoyl-CoA to the 6-position of the mannose ring linked to the 2-position of myo-inositol in phosphatidyl-myo-inositol monomannoside (PIM1) or dimannoside (PIM2). This is Phosphatidylinositol mannoside acyltransferase from Mycobacterium tuberculosis (strain CDC 1551 / Oshkosh).